Reading from the N-terminus, the 199-residue chain is GTP cyclohydrolase 1 (199 aa).

Residues cysteine 89, histidine 92, and cysteine 161 each contribute to the Zn(2+) site.

Belongs to the GTP cyclohydrolase I family. Toroid-shaped homodecamer, composed of two pentamers of five dimers.

The catalysed reaction is GTP + H2O = 7,8-dihydroneopterin 3'-triphosphate + formate + H(+). Its pathway is cofactor biosynthesis; 7,8-dihydroneopterin triphosphate biosynthesis; 7,8-dihydroneopterin triphosphate from GTP: step 1/1. This is GTP cyclohydrolase 1 from Bifidobacterium longum (strain NCC 2705).